The primary structure comprises 116 residues: Methionine-R-sulfoxide reductase B1 (116 aa).

A MsrB domain is found at 1-106; it reads MSFCSFFGGE…FSSSLKFVPK (106 aa). 4 residues coordinate Zn(2+): C23, C26, C71, and C74. U95 (nucleophile) is an active-site residue. Residue U95 is a non-standard amino acid, selenocysteine.

It belongs to the MsrB Met sulfoxide reductase family. Requires Zn(2+) as cofactor. Post-translationally, truncated MSRB1/SEPX1 proteins produced by failed UGA/Sec decoding are ubiquitinated by the CRL2(FEM1C) E3 ubiquitin-protein ligase complex.

Its subcellular location is the cytoplasm. It is found in the nucleus. It localises to the cytoskeleton. It carries out the reaction L-methionyl-[protein] + [thioredoxin]-disulfide + H2O = L-methionyl-(R)-S-oxide-[protein] + [thioredoxin]-dithiol. The enzyme catalyses [thioredoxin]-disulfide + L-methionine + H2O = L-methionine (R)-S-oxide + [thioredoxin]-dithiol. In terms of biological role, methionine-sulfoxide reductase that specifically reduces methionine (R)-sulfoxide back to methionine. While in many cases, methionine oxidation is the result of random oxidation following oxidative stress, methionine oxidation is also a post-translational modification that takes place on specific residue. Acts as a regulator of actin assembly by reducing methionine (R)-sulfoxide mediated by MICALs (MICAL1, MICAL2 or MICAL3) on actin, thereby promoting filament repolymerization. Plays a role in innate immunity by reducing oxidized actin, leading to actin repolymerization in macrophages. This is Methionine-R-sulfoxide reductase B1 (MSRB1) from Pongo abelii (Sumatran orangutan).